We begin with the raw amino-acid sequence, 872 residues long: Protein SEY1 (872 aa).

Topologically, residues 1–749 (MVANGHFAGV…KRSAIGGITQ (749 aa)) are cytoplasmic. One can recognise a GB1/RHD3-type G domain in the interval 49–294 (GFNYHLISVF…IEGGIFLPEY (246 aa)). 59–66 (GSQSTGKS) serves as a coordination point for GTP. Residues 482–504 (SNYQQELSLYQKDLENIGGQLRR) adopt a coiled-coil conformation. A disordered region spans residues 676-704 (LDKWIGHTPSSATPADEEDLTPIGGVDED). Over residues 690-704 (ADEEDLTPIGGVDED) the composition is skewed to acidic residues. The helical transmembrane segment at 750 to 770 (VPLYFYGLLLALGWNEIVAVL) threads the bilayer. At 771-773 (RNP) the chain is on the lumenal side. The chain crosses the membrane as a helical span at residues 774 to 794 (AYFLLLFVCAVTAYVTYQLNL). The Cytoplasmic portion of the chain corresponds to 795–872 (WGPIIKMTEA…IDDADDDDDF (78 aa)). The disordered stretch occupies residues 849-872 (NRKSAGGFQNNRSHIDDADDDDDF).

It belongs to the TRAFAC class dynamin-like GTPase superfamily. GB1/RHD3 GTPase family. RHD3 subfamily.

It localises to the endoplasmic reticulum membrane. Functionally, cooperates with the reticulon proteins and tubule-shaping DP1 family proteins to generate and maintain the structure of the tubular endoplasmic reticulum network. Has GTPase activity, which is required for its function in ER organization. In Paracoccidioides brasiliensis (strain Pb03), this protein is Protein SEY1.